We begin with the raw amino-acid sequence, 585 residues long: YTH domain-containing family protein 3 (585 aa).

3 disordered regions span residues 1 to 51 (MSAT…SYPP), 244 to 277 (KPAK…MNIG), and 304 to 350 (PQPL…QPQL). Position 2 is an N-acetylserine (Ser-2). Residues 15–24 (NKVSVQNGSI) show a composition bias toward polar residues. Ser-23 carries the post-translational modification Phosphoserine. A compositionally biased stretch (basic residues) spans 244–254 (KPAKPQPKLKP). Residues 329 to 350 (QQQQGPQPQAQPHQVQSQQPQL) show a composition bias toward low complexity. The YTH domain maps to 416 to 550 (GRVFIIKSYS…EKAKQVLKII (135 aa)). RNA contacts are provided by residues 422 to 424 (KSY), Asp-428, 438 to 439 (WC), Asn-468, Trp-492, and Trp-497.

The protein belongs to the YTHDF family. YTHDF3 subfamily. Interacts with CNOT1; promoting recruitment of the CCR4-NOT complex. Interacts with YTHDF1. Interacts with YTHDF2. Interacts with PAN3.

The protein resides in the cytoplasm. It is found in the cytosol. The protein localises to the P-body. Its subcellular location is the stress granule. Its function is as follows. Specifically recognizes and binds N6-methyladenosine (m6A)-containing RNAs, and regulates their stability. M6A is a modification present at internal sites of mRNAs and some non-coding RNAs and plays a role in mRNA stability and processing. Acts as a regulator of mRNA stability by promoting degradation of m6A-containing mRNAs via interaction with the CCR4-NOT complex or PAN3. The YTHDF paralogs (YTHDF1, YTHDF2 and YTHDF3) share m6A-containing mRNAs targets and act redundantly to mediate mRNA degradation and cellular differentiation. Acts as a negative regulator of type I interferon response by down-regulating interferon-stimulated genes (ISGs) expression: acts by binding to FOXO3 mRNAs. Binds to FOXO3 mRNAs independently of METTL3-mediated m6A modification. Can also act as a regulator of mRNA stability in cooperation with YTHDF2 by binding to m6A-containing mRNA and promoting their degradation. Recognizes and binds m6A-containing circular RNAs (circRNAs); circRNAs are generated through back-splicing of pre-mRNAs, a non-canonical splicing process promoted by dsRNA structures across circularizing exons. Promotes formation of phase-separated membraneless compartments, such as P-bodies or stress granules, by undergoing liquid-liquid phase separation upon binding to mRNAs containing multiple m6A-modified residues: polymethylated mRNAs act as a multivalent scaffold for the binding of YTHDF proteins, juxtaposing their disordered regions and thereby leading to phase separation. The resulting mRNA-YTHDF complexes then partition into different endogenous phase-separated membraneless compartments, such as P-bodies, stress granules or neuronal RNA granules. May also recognize and bind N1-methyladenosine (m1A)-containing mRNAs: inhibits trophoblast invasion by binding to m1A-methylated transcripts of IGF1R, promoting their degradation. The sequence is that of YTH domain-containing family protein 3 from Mus musculus (Mouse).